Here is a 750-residue protein sequence, read N- to C-terminus: Photosystem I P700 chlorophyll a apoprotein A1 (750 aa).

Transmembrane regions (helical) follow at residues 70-93 (VFSAHFGQLSIIFLWLSGMYFHGA), 156-179 (LYCTAIGALIFASLMLFAGWFHYH), 195-219 (LNHHLAGLLGLGSLSWAGHQIHVSL), 291-309 (IAHHHLAIAILFLIAGHMY), 346-369 (WHAQLSLNLAMLGSTTIVVAHHMY), 385-411 (LSLFTHHMWIGGFLIVGAAAHAAIFMV), 433-455 (AIISHLNWVCIFLGFHSFGLYIH), and 531-549 (FLVHHIHAFTIHVTVLILL). 2 residues coordinate [4Fe-4S] cluster: Cys573 and Cys582. Helical transmembrane passes span 589–610 (HVFLGLFWMYNSISVVIFHFSW) and 664–686 (LSAYGLFFLGAHFVWAFSLMFLF). His675 serves as a coordination point for chlorophyll a'. Residues Met683 and Tyr691 each coordinate chlorophyll a. Position 692 (Trp692) interacts with phylloquinone. Residues 724 to 744 (AVGVTHYLLGGIATTWAFFLA) form a helical membrane-spanning segment.

It belongs to the PsaA/PsaB family. The PsaA/B heterodimer binds the P700 chlorophyll special pair and subsequent electron acceptors. PSI consists of a core antenna complex that captures photons, and an electron transfer chain that converts photonic excitation into a charge separation. The eukaryotic PSI reaction center is composed of at least 11 subunits. The cofactor is P700 is a chlorophyll a/chlorophyll a' dimer, A0 is one or more chlorophyll a, A1 is one or both phylloquinones and FX is a shared 4Fe-4S iron-sulfur center..

The protein resides in the plastid. It localises to the chloroplast thylakoid membrane. It carries out the reaction reduced [plastocyanin] + hnu + oxidized [2Fe-2S]-[ferredoxin] = oxidized [plastocyanin] + reduced [2Fe-2S]-[ferredoxin]. Functionally, psaA and PsaB bind P700, the primary electron donor of photosystem I (PSI), as well as the electron acceptors A0, A1 and FX. PSI is a plastocyanin-ferredoxin oxidoreductase, converting photonic excitation into a charge separation, which transfers an electron from the donor P700 chlorophyll pair to the spectroscopically characterized acceptors A0, A1, FX, FA and FB in turn. Oxidized P700 is reduced on the lumenal side of the thylakoid membrane by plastocyanin. The protein is Photosystem I P700 chlorophyll a apoprotein A1 of Oryza nivara (Indian wild rice).